Consider the following 251-residue polypeptide: MTNAVTVKNITFQEGETLICVPLIGKTLDEILGNAHGLVDAGADIIEWRVDHFAQVREMAQVMAALAEIRGALKALPLLFTFRSKKEGGETELSDEAYFALNREAARSGLVDVIDIELFNDEAQIRALVDDAHAAGVKVIMSNHDFHKTPAQEDIIYRLRRMQDLGADLPKIAVMPQSPQDVLTLLAATLTMKEKYATRPLITMSMGKSGGVSRVTGRLFGSAMTFGTVGQASAPGQIAIAKLREVMDILS.

Residues 47–49 (EWR) and Arg-83 each bind 3-dehydroquinate. The Proton donor/acceptor role is filled by His-144. The active-site Schiff-base intermediate with substrate is Lys-171. The 3-dehydroquinate site is built by Arg-214, Ser-233, and Gln-237.

This sequence belongs to the type-I 3-dehydroquinase family. As to quaternary structure, homodimer.

It catalyses the reaction 3-dehydroquinate = 3-dehydroshikimate + H2O. Its pathway is metabolic intermediate biosynthesis; chorismate biosynthesis; chorismate from D-erythrose 4-phosphate and phosphoenolpyruvate: step 3/7. Involved in the third step of the chorismate pathway, which leads to the biosynthesis of aromatic amino acids. Catalyzes the cis-dehydration of 3-dehydroquinate (DHQ) and introduces the first double bond of the aromatic ring to yield 3-dehydroshikimate. The chain is 3-dehydroquinate dehydratase from Klebsiella pneumoniae subsp. pneumoniae (strain ATCC 700721 / MGH 78578).